The sequence spans 261 residues: Cytochrome c oxidase subunit 3 (261 aa).

At 1–15 (MTHQTHAYHMVNPSP) the chain is on the mitochondrial matrix side. The chain crosses the membrane as a helical span at residues 16–34 (WPLTGALSALLMTSGLTMW). The Mitochondrial intermembrane portion of the chain corresponds to 35-40 (FHYNST). A helical membrane pass occupies residues 41–66 (ILLMLGLTTNMLTMYQWWRDIIREST). The Mitochondrial matrix segment spans residues 67-72 (FQGHHT). The helical transmembrane segment at 73-105 (PTVQKGLRYGMILFIISEVLFFTGFFWAFYHSS) threads the bilayer. Residues 106–128 (LAPTPELGGCWPPTGIHPLNPLE) are Mitochondrial intermembrane-facing. The helical transmembrane segment at 129-152 (VPLLNTSVLLASGVSITWAHHSLM) threads the bilayer. Topologically, residues 153–155 (EGD) are mitochondrial matrix. The chain crosses the membrane as a helical span at residues 156-183 (RNHMLQALFITIALGIYFTLLQASEYYE). Over 184-190 (APFTISD) the chain is Mitochondrial intermembrane. A helical membrane pass occupies residues 191 to 223 (GVYGSTFFVATGFHGLHVIIGSTFLIVCFFRQL). Topologically, residues 224–232 (KFHFTSSHH) are mitochondrial matrix. Residues 233-256 (FGFEAAAWYWHFVDVVWLFLYVSI) form a helical membrane-spanning segment. Residues 257 to 261 (YWWGS) lie on the Mitochondrial intermembrane side of the membrane.

The protein belongs to the cytochrome c oxidase subunit 3 family. As to quaternary structure, component of the cytochrome c oxidase (complex IV, CIV), a multisubunit enzyme composed of 14 subunits. The complex is composed of a catalytic core of 3 subunits MT-CO1, MT-CO2 and MT-CO3, encoded in the mitochondrial DNA, and 11 supernumerary subunits COX4I, COX5A, COX5B, COX6A, COX6B, COX6C, COX7A, COX7B, COX7C, COX8 and NDUFA4, which are encoded in the nuclear genome. The complex exists as a monomer or a dimer and forms supercomplexes (SCs) in the inner mitochondrial membrane with NADH-ubiquinone oxidoreductase (complex I, CI) and ubiquinol-cytochrome c oxidoreductase (cytochrome b-c1 complex, complex III, CIII), resulting in different assemblies (supercomplex SCI(1)III(2)IV(1) and megacomplex MCI(2)III(2)IV(2)).

The protein resides in the mitochondrion inner membrane. It carries out the reaction 4 Fe(II)-[cytochrome c] + O2 + 8 H(+)(in) = 4 Fe(III)-[cytochrome c] + 2 H2O + 4 H(+)(out). Component of the cytochrome c oxidase, the last enzyme in the mitochondrial electron transport chain which drives oxidative phosphorylation. The respiratory chain contains 3 multisubunit complexes succinate dehydrogenase (complex II, CII), ubiquinol-cytochrome c oxidoreductase (cytochrome b-c1 complex, complex III, CIII) and cytochrome c oxidase (complex IV, CIV), that cooperate to transfer electrons derived from NADH and succinate to molecular oxygen, creating an electrochemical gradient over the inner membrane that drives transmembrane transport and the ATP synthase. Cytochrome c oxidase is the component of the respiratory chain that catalyzes the reduction of oxygen to water. Electrons originating from reduced cytochrome c in the intermembrane space (IMS) are transferred via the dinuclear copper A center (CU(A)) of subunit 2 and heme A of subunit 1 to the active site in subunit 1, a binuclear center (BNC) formed by heme A3 and copper B (CU(B)). The BNC reduces molecular oxygen to 2 water molecules using 4 electrons from cytochrome c in the IMS and 4 protons from the mitochondrial matrix. This is Cytochrome c oxidase subunit 3 (MT-CO3) from Tragelaphus imberbis (Lesser kudu).